Consider the following 389-residue polypeptide: Succinate--CoA ligase [ADP-forming] subunit beta (389 aa).

Positions 9–236 constitute an ATP-grasp domain; that stretch reads RDLFEAHGVP…ERTEDPLEAK (228 aa). Residues Lys-45, 52–54, Ala-94, and Glu-99 contribute to the ATP site; that span reads GRG. Asn-191 and Asp-205 together coordinate Mg(2+). Residues Asn-256 and 318 to 320 contribute to the substrate site; that span reads GIT.

It belongs to the succinate/malate CoA ligase beta subunit family. Heterotetramer of two alpha and two beta subunits. Mg(2+) is required as a cofactor.

The catalysed reaction is succinate + ATP + CoA = succinyl-CoA + ADP + phosphate. The enzyme catalyses GTP + succinate + CoA = succinyl-CoA + GDP + phosphate. It participates in carbohydrate metabolism; tricarboxylic acid cycle; succinate from succinyl-CoA (ligase route): step 1/1. Its function is as follows. Succinyl-CoA synthetase functions in the citric acid cycle (TCA), coupling the hydrolysis of succinyl-CoA to the synthesis of either ATP or GTP and thus represents the only step of substrate-level phosphorylation in the TCA. The beta subunit provides nucleotide specificity of the enzyme and binds the substrate succinate, while the binding sites for coenzyme A and phosphate are found in the alpha subunit. This chain is Succinate--CoA ligase [ADP-forming] subunit beta, found in Micrococcus luteus (strain ATCC 4698 / DSM 20030 / JCM 1464 / CCM 169 / CCUG 5858 / IAM 1056 / NBRC 3333 / NCIMB 9278 / NCTC 2665 / VKM Ac-2230) (Micrococcus lysodeikticus).